Reading from the N-terminus, the 442-residue chain is Proline--tRNA ligase (442 aa).

The protein belongs to the class-II aminoacyl-tRNA synthetase family. ProS type 2 subfamily. As to quaternary structure, homodimer.

It is found in the cytoplasm. It carries out the reaction tRNA(Pro) + L-proline + ATP = L-prolyl-tRNA(Pro) + AMP + diphosphate. In terms of biological role, catalyzes the attachment of proline to tRNA(Pro) in a two-step reaction: proline is first activated by ATP to form Pro-AMP and then transferred to the acceptor end of tRNA(Pro). This Chelativorans sp. (strain BNC1) protein is Proline--tRNA ligase.